The primary structure comprises 228 residues: Fibrillarin-like rRNA/tRNA 2'-O-methyltransferase (228 aa).

S-adenosyl-L-methionine is bound by residues 85 to 86, 103 to 104, 128 to 129, and 148 to 151; these read TT, EF, DA, and DVAQ.

The protein belongs to the methyltransferase superfamily. Fibrillarin family. Interacts with nop5. Component of box C/D small ribonucleoprotein (sRNP) particles that contain rpl7ae, FlpA and nop5, plus a guide RNA.

Functionally, involved in pre-rRNA and tRNA processing. Utilizes the methyl donor S-adenosyl-L-methionine to catalyze the site-specific 2'-hydroxyl methylation of ribose moieties in rRNA and tRNA. Site specificity is provided by a guide RNA that base pairs with the substrate. Methylation occurs at a characteristic distance from the sequence involved in base pairing with the guide RNA. This chain is Fibrillarin-like rRNA/tRNA 2'-O-methyltransferase, found in Methanococcus voltae.